The following is a 58-amino-acid chain: Bowman-Birk type wound-induced trypsin inhibitor (58 aa).

7 cysteine pairs are disulfide-bonded: cysteine 4-cysteine 57, cysteine 5-cysteine 20, cysteine 8-cysteine 53, cysteine 10-cysteine 18, cysteine 27-cysteine 34, cysteine 31-cysteine 46, and cysteine 36-cysteine 44.

Belongs to the Bowman-Birk serine protease inhibitor family.

The protein is Bowman-Birk type wound-induced trypsin inhibitor of Medicago sativa (Alfalfa).